Reading from the N-terminus, the 528-residue chain is Ceramide glucosyltransferase (528 aa).

The Lumenal portion of the chain corresponds to 1-6 (MYSFIE). A helical transmembrane segment spans residues 7–27 (CIAGALFVLGCVVVTLVVIGV). Residues 28-369 (RALLYNFRNR…TVLSATILEP (342 aa)) lie on the Cytoplasmic side of the membrane. Position 94 (aspartate 94) is a short sequence motif, D1. Aspartate 154 is a short sequence motif (D2). Residue aspartate 308 is a short sequence motif, D3. Aspartate 308 serves as the catalytic Proton acceptor. The (Q/R)XXRW motif lies at 349–353 (RRSRW). A helical transmembrane segment spans residues 370-390 (FTECFLFATYMSLAMTTIPVL). At 391 to 402 (SQNLGIPKTWNA) the chain is on the lumenal side. Residues 403–423 (TAIAWFTITTLWMLIDYIGYL) traverse the membrane as a helical segment. The Cytoplasmic segment spans residues 424–457 (RLHSGVTMEVDEHTPYFAKGFKNTGGIKRRPFLE). Residues 458–478 (FLAAWIGREGLAFPVWAYAVV) form a helical membrane-spanning segment. Residues 479–528 (FGNTVNWRGRLFYIHWDTTVDAVEPREERTREVRTPELERGPSRNKHRVD) lie on the Lumenal side of the membrane. Positions 503–528 (PREERTREVRTPELERGPSRNKHRVD) are disordered.

It belongs to the glycosyltransferase 2 family.

The protein resides in the golgi apparatus membrane. It carries out the reaction an N-acylsphing-4-enine + UDP-alpha-D-glucose = a beta-D-glucosyl-(1&lt;-&gt;1')-N-acylsphing-4-enine + UDP + H(+). Its pathway is lipid metabolism; sphingolipid metabolism. In terms of biological role, catalyzes the final step in the biosynthesis of the membrane lipid glucosylceramide (GluCer), the transfer of glucose to ceramide. Glucosylceramides play important roles in growth, differentiation and pathogenicity. Contribution to fungal pathogenesis is host-dependent. The polypeptide is Ceramide glucosyltransferase (Gibberella zeae (strain ATCC MYA-4620 / CBS 123657 / FGSC 9075 / NRRL 31084 / PH-1) (Wheat head blight fungus)).